A 219-amino-acid polypeptide reads, in one-letter code: Interleukin-12 subunit alpha (219 aa).

Positions 1-22 are cleaved as a signal peptide; sequence MCPARSLLLVATLVLLDYLSLA. N-linked (GlcNAc...) asparagine glycosylation is found at N24, N93, and N107. Cystine bridges form between C37–C110, C64–C196, and C85–C123.

This sequence belongs to the IL-6 superfamily. As to quaternary structure, heterodimer with IL12B; disulfide-linked. This heterodimer is known as interleukin IL-12. Heterodimer with EBI3/IL27B; not disulfide-linked. This heterodimer is known as interleukin IL-35. Interacts with NBR1; this interaction promotes IL-12 secretion.

The protein localises to the secreted. In terms of biological role, heterodimerizes with IL12B to form the IL-12 cytokine or with EBI3/IL27B to form the IL-35 cytokine. IL-12 is primarily produced by professional antigen-presenting cells (APCs) such as B-cells and dendritic cells (DCs) as well as macrophages and granulocytes and regulates T-cell and natural killer-cell responses, induces the production of interferon-gamma (IFN-gamma), favors the differentiation of T-helper 1 (Th1) cells and is an important link between innate resistance and adaptive immunity. Mechanistically, exerts its biological effects through a receptor composed of IL12R1 and IL12R2 subunits. Binding to the receptor results in the rapid tyrosine phosphorylation of a number of cellular substrates including the JAK family kinases TYK2 and JAK2. In turn, recruited STAT4 gets phosphorylated and translocates to the nucleus where it regulates cytokine/growth factor responsive genes. As part of IL-35, plays essential roles in maintaining the immune homeostasis of the liver microenvironment and also functions as an immune-suppressive cytokine. Mediates biological events through unconventional receptors composed of IL12RB2 and gp130/IL6ST heterodimers or homodimers. Signaling requires the transcription factors STAT1 and STAT4, which form a unique heterodimer that binds to distinct DNA sites. This chain is Interleukin-12 subunit alpha (IL12A), found in Macaca mulatta (Rhesus macaque).